The following is a 120-amino-acid chain: Large ribosomal subunit protein bL12 (120 aa).

The protein belongs to the bacterial ribosomal protein bL12 family. Homodimer. Part of the ribosomal stalk of the 50S ribosomal subunit. Forms a multimeric L10(L12)X complex, where L10 forms an elongated spine to which 2 to 4 L12 dimers bind in a sequential fashion. Binds GTP-bound translation factors.

Functionally, forms part of the ribosomal stalk which helps the ribosome interact with GTP-bound translation factors. Is thus essential for accurate translation. The polypeptide is Large ribosomal subunit protein bL12 (Haemophilus ducreyi (strain 35000HP / ATCC 700724)).